The primary structure comprises 4306 residues: Cytoplasmic dynein 2 heavy chain 1 (4306 aa).

A stem region spans residues 1–1650; that stretch reads MAGSLGDVRK…YVQMVDSELQ (1650 aa). ATP is bound at residue 145-152; the sequence is LGIVLRKS. A coiled-coil region spans residues 669 to 696; the sequence is KELEGYIQKLQNAAERLATENRRLRKWH. AAA stretches follow at residues 1651–1875, 1941–2161, 2249–2505, and 2617–2862; these read YTYE…VLRG, SALK…KQND, LTAD…WVLG, and HYGR…ESCK. Residues 1689 to 1696, 1979 to 1986, 2291 to 2298, and 2655 to 2662 contribute to the ATP site; these read GPAGTGKT, GPSGAGKS, GPEGCGKG, and GRSGVGRR. A stalk region spans residues 2880–3168; sequence AISSSKKKEL…AEVSKAQETI (289 aa). 3 coiled-coil regions span residues 2896-2981, 3108-3199, and 3407-3441; these read LQAG…KEVQ, LETE…LATL, and IQHE…SLLE. AAA stretches follow at residues 3243–3472 and 3689–3904; these read LCTE…LIQD and MALF…VIDR.

The protein belongs to the dynein heavy chain family. As to quaternary structure, the cytoplasmic dynein complex 2 is probably composed by a heavy chain DYNC2H1 homodimer and a number of DYNC2LI1 light intermediate chains. Detected in brain, lung, spleen and kidney (at protein level). Enriched in the ependymal layer lining the lateral ventricles (at protein level).

The protein localises to the cytoplasm. It localises to the cytoskeleton. The protein resides in the cilium axoneme. It is found in the cell membrane. Functionally, may function as a motor for intraflagellar retrograde transport. Functions in cilia biogenesis. According to PubMed:8666668, it may play a role in transport between endoplasmic reticulum and Golgi or organization of the Golgi in cells. This is Cytoplasmic dynein 2 heavy chain 1 (Dync2h1) from Mus musculus (Mouse).